A 216-amino-acid polypeptide reads, in one-letter code: Probable GTP-binding protein EngB (216 aa).

In terms of domain architecture, EngB-type G spans 26–200; the sequence is EGIEIAFAGR…RAKLDTWFAP (175 aa). Residues 34–41, 61–65, 79–82, 146–149, and 179–181 each bind GTP; these read GRSNAGKS, GRTQL, DLPG, TKAD, and YSS. Mg(2+) is bound by residues S41 and T63.

This sequence belongs to the TRAFAC class TrmE-Era-EngA-EngB-Septin-like GTPase superfamily. EngB GTPase family. Mg(2+) serves as cofactor.

Its function is as follows. Necessary for normal cell division and for the maintenance of normal septation. This chain is Probable GTP-binding protein EngB, found in Vibrio vulnificus (strain YJ016).